Here is a 113-residue protein sequence, read N- to C-terminus: 14 kDa zinc-binding protein (113 aa).

Residues 3 to 113 form the HIT domain; the sequence is IFGKIISKEI…GGRQMNWPPG (111 aa). Positions 97-101 match the Histidine triad motif motif; that stretch reads HIHVH.

Homodimer.

The chain is 14 kDa zinc-binding protein from Brassica juncea (Indian mustard).